The chain runs to 406 residues: Plasma serine protease inhibitor (406 aa).

The N-terminal stretch at 1–19 (MQLFLLLCLVLLSPQGASL) is a signal peptide. Positions 20-25 (HRHHPR) are cleaved as a propeptide — removed in mature form. Threonine 39 carries O-linked (GalNAc...) threonine glycosylation. Residues asparagine 249, asparagine 262, and asparagine 338 are each glycosylated (N-linked (GlcNAc...) asparagine).

The protein belongs to the serpin family. Forms protease inhibiting heterodimers in extracellular body fluids with serine proteases such as activated protein C/coagulation factor V/F5, acrosin/ACR, chymotrypsinogen B/CTRB1, prothrombin/F2, factor Xa/F10, factor XI/F11, kallikrein/KLKB1, tissue kallikrein, trypsin/PRSS1, prostate specific antigen/KLK3, tissue plasminogen activator/PLAT and urinary plasminogen activator/PLAU. Forms membrane-anchored serine proteases inhibiting heterodimers with TMPRSS7 and TMPRSS11E. Interacts with SEMG2. N- and O-glycosylated. N-glycosylation consists of a mixture of sialylated bi- (including sialyl-Lewis X epitopes), tri- and tetra-antennary complex-type chains; affects the maximal heparin- and thrombomodulin-enhanced rates of thrombin inhibition. O-glycosylated with core 1 or possibly core 8 glycans. Further modified with 2 sialic acid residues. In terms of processing, proteolytically cleaved. Inhibition of proteases is accompanied by formation of a stable enzyme-inhibitor complex and by degradation of the serpin to lower molecular weight derivatives. Proteolytically cleaved at the N-terminus; inhibits slightly the heparin- and thrombomodulin-enhanced rates of thrombin inhibition. As to expression, predominantly expressed in the epithelium of seminal vesicles. Expressed in the proximal tubular epithelium of the kidney. Expressed in the superficial and more differentiated epidermal keratinocytes of the skin. Expressed in megakaryocytes and platelets. Expressed poorly in kidney tumor cells compared to non tumor kidney tissues. Expressed in spermatozoa. Present in very high concentration in seminal plasma. Present in high concentration in plasma, synovial and Graaf follicle fluids. Present in low concentration in breast milk and in amniotic fluids. Present in very low concentration in urine, cerebrospinal fluids, saliva and tears (at protein level). Strongly expressed in liver. Expressed in kidney, spleen, pancreas, skeletal muscle, heart, testes, ovary, interstitial Leydig cells, epididymal glands, seminal vesicles and prostate.

Its subcellular location is the secreted. The protein resides in the extracellular space. Its inhibitory activity is greatly enhanced in the presence of glycosaminoglycans, heparin, thrombomodulin and phospholipids vesicles. Its function is as follows. Heparin-dependent serine protease inhibitor acting in body fluids and secretions. Inactivates serine proteases by binding irreversibly to their serine activation site. Involved in the regulation of intravascular and extravascular proteolytic activities. Plays hemostatic roles in the blood plasma. Acts as a procoagulant and pro-inflammatory factor by inhibiting the anticoagulant activated protein C factor as well as the generation of activated protein C factor by the thrombin/thrombomodulin complex. Acts as an anticoagulant factor by inhibiting blood coagulation factors like prothrombin, factor XI, factor Xa, plasma kallikrein and fibrinolytic enzymes such as tissue- and urinary-type plasminogen activators. In seminal plasma, inactivates several serine proteases implicated in the reproductive system. Inhibits the serpin acrosin; indirectly protects component of the male genital tract from being degraded by excessive released acrosin. Inhibits tissue- and urinary-type plasminogen activator, prostate-specific antigen and kallikrein activities; has a control on the sperm motility and fertilization. Inhibits the activated protein C-catalyzed degradation of SEMG1 and SEMG2; regulates the degradation of semenogelin during the process of transfer of spermatozoa from the male reproductive tract into the female tract. In urine, inhibits urinary-type plasminogen activator and kallikrein activities. Inactivates membrane-anchored serine proteases activities such as MPRSS7 and TMPRSS11E. Inhibits urinary-type plasminogen activator-dependent tumor cell invasion and metastasis. May also play a non-inhibitory role in seminal plasma and urine as a hydrophobic hormone carrier by its binding to retinoic acid. The polypeptide is Plasma serine protease inhibitor (SERPINA5) (Homo sapiens (Human)).